Here is a 34-residue protein sequence, read N- to C-terminus: Potassium channel toxin alpha-KTx 6.3 (34 aa).

4 cysteine pairs are disulfide-bonded: C3-C24, C9-C29, C13-C31, and C19-C34. Cysteine amide is present on C34.

It belongs to the short scorpion toxin superfamily. Potassium channel inhibitor family. Alpha-KTx 06 subfamily. Post-translationally, amidated. The amidated toxin shows 5-fold more affinity for Kv1.3/KCNA3 than the synthetic carboxylated form. Expressed by the venom gland.

The protein resides in the secreted. Potently blocks voltage-gated potassium channels Kv1.1/KCNA1 (IC(50)=7-11 nM) and Kv1.3/KCNA3 (IC(50)=11-29 pM). Also mildly blocks intermediate (IK) conductance calcium-activated potassium channels (KCa3.1/KCNN4) and ERG1/Kv11.1/KCNH2. Shows ability to suppress proliferation of lymphocytes, which are known to be sensitive to Kv1.3/KCNA3 homotetrameric channel block. This is Potassium channel toxin alpha-KTx 6.3 from Heterometrus spinifer (Asia giant forest scorpion).